We begin with the raw amino-acid sequence, 131 residues long: UPF0146 protein PH0209 (131 aa).

It belongs to the UPF0146 family.

This chain is UPF0146 protein PH0209, found in Pyrococcus horikoshii (strain ATCC 700860 / DSM 12428 / JCM 9974 / NBRC 100139 / OT-3).